An 824-amino-acid polypeptide reads, in one-letter code: Probable ion channel POLLUX (824 aa).

The segment covering 45–54 (DGDDSSNLPT) has biased composition (low complexity). Residues 45–70 (DGDDSSNLPTVPNPEEKPVPVPSQSP) form a disordered region. 4 helical membrane-spanning segments follow: residues 81-101 (FSLT…VMFL), 135-155 (AVVF…YMYL), 198-218 (LALL…LYAV), and 250-270 (IVSV…LGLI). 2 RCK N-terminal domains span residues 291–432 (SNHI…ETVV) and 550–699 (PEKI…DKSI). The stretch at 325–346 (LAERDKEEMETDIAKFEFDLMG) forms a coiled coil.

Belongs to the castor/pollux (TC 1.A.1.23) family.

The protein resides in the nucleus membrane. This chain is Probable ion channel POLLUX, found in Arabidopsis thaliana (Mouse-ear cress).